The primary structure comprises 1069 residues: Leucine--tRNA ligase (1069 aa).

A disordered region spans residues 19-53 (TAEHGTGAANATASPSGAVPPSGATATAGTGDEPG). The 'HIGH' region signature appears at 107 to 118 (PYPSGTGLHVGH). Positions 823–836 (GRFTHHGAPVDRRS) are enriched in basic and acidic residues. Residues 823–846 (GRFTHHGAPVDRRSGKMGKSLKNS) are disordered. The short motif at 838 to 842 (KMGKS) is the 'KMSKS' region element. Residue K841 participates in ATP binding.

This sequence belongs to the class-I aminoacyl-tRNA synthetase family.

It is found in the cytoplasm. The catalysed reaction is tRNA(Leu) + L-leucine + ATP = L-leucyl-tRNA(Leu) + AMP + diphosphate. The polypeptide is Leucine--tRNA ligase (Frankia alni (strain DSM 45986 / CECT 9034 / ACN14a)).